Reading from the N-terminus, the 136-residue chain is Probable 5-hydroxyisourate hydrolase ZK697.8 (136 aa).

The N-terminal stretch at 1–19 is a signal peptide; that stretch reads MIKFLLFLAIAAATVISNA. The substrate site is built by H31, R69, and Y133.

It belongs to the transthyretin family. 5-hydroxyisourate hydrolase subfamily. As to quaternary structure, homotetramer.

It catalyses the reaction 5-hydroxyisourate + H2O = 5-hydroxy-2-oxo-4-ureido-2,5-dihydro-1H-imidazole-5-carboxylate + H(+). Functionally, catalyzes the hydrolysis of 5-hydroxyisourate (HIU) to 2-oxo-4-hydroxy-4-carboxy-5-ureidoimidazoline (OHCU). This chain is Probable 5-hydroxyisourate hydrolase ZK697.8, found in Caenorhabditis elegans.